The following is a 67-amino-acid chain: uncharacterized protein (67 aa).

Residues 1 to 28 (MSHVSVIAARLLVWVGILLCLGVPQLWA) form the signal peptide. N-linked (GlcNAc...) asparagine; by host glycosylation occurs at Asn-39.

This is an uncharacterized protein from Invertebrate iridescent virus 3 (IIV-3).